Reading from the N-terminus, the 215-residue chain is Pyrrolidone-carboxylate peptidase (215 aa).

Residues Glu-80, Cys-143, and His-167 contribute to the active site.

This sequence belongs to the peptidase C15 family. In terms of assembly, homotetramer.

It localises to the cytoplasm. The enzyme catalyses Release of an N-terminal pyroglutamyl group from a polypeptide, the second amino acid generally not being Pro.. Removes 5-oxoproline from various penultimate amino acid residues except L-proline. The sequence is that of Pyrrolidone-carboxylate peptidase from Bacillus cytotoxicus (strain DSM 22905 / CIP 110041 / 391-98 / NVH 391-98).